Here is a 229-residue protein sequence, read N- to C-terminus: Putative N-acetylmannosamine-6-phosphate 2-epimerase (229 aa).

This sequence belongs to the NanE family.

It carries out the reaction an N-acyl-D-glucosamine 6-phosphate = an N-acyl-D-mannosamine 6-phosphate. It participates in amino-sugar metabolism; N-acetylneuraminate degradation; D-fructose 6-phosphate from N-acetylneuraminate: step 3/5. Functionally, converts N-acetylmannosamine-6-phosphate (ManNAc-6-P) to N-acetylglucosamine-6-phosphate (GlcNAc-6-P). This is Putative N-acetylmannosamine-6-phosphate 2-epimerase from Escherichia coli O127:H6 (strain E2348/69 / EPEC).